The following is a 62-amino-acid chain: Small ribosomal subunit protein eS27 (62 aa).

The Zn(2+) site is built by Cys-17, Cys-20, Cys-36, and Cys-39. The C4-type zinc finger occupies 17 to 39 (CPECNNEQIVFGSPATVVKCLTC).

Belongs to the eukaryotic ribosomal protein eS27 family. Part of the 30S ribosomal subunit. Zn(2+) is required as a cofactor.

This Methanocaldococcus jannaschii (strain ATCC 43067 / DSM 2661 / JAL-1 / JCM 10045 / NBRC 100440) (Methanococcus jannaschii) protein is Small ribosomal subunit protein eS27.